We begin with the raw amino-acid sequence, 672 residues long: NADPH-Fe(3+) oxidoreductase subunit beta (672 aa).

4 residues coordinate [4Fe-4S] cluster: Cys-203, Cys-207, Cys-211, and Cys-215. 254–283 (KKVAIVGAGPAGLACAYYLALEGYPCTIYE) serves as a coordination point for FAD. 388–421 (GKKVVVVGGGNTAIDCVRVALREGAEESTLLYRR) contacts NADP(+). 552-562 (TDLEGVFAGGD) serves as a coordination point for FAD.

As to quaternary structure, heterotetramer with 2 alpha subunits. It depends on [4Fe-4S] cluster as a cofactor. FAD is required as a cofactor.

It localises to the cell membrane. Functionally, probably involved in acetate metabolism and not in the reduction of Fe(3+) chelates. May serve as a major route for NADP regeneration. This chain is NADPH-Fe(3+) oxidoreductase subunit beta (sfrB), found in Geobacter sulfurreducens (strain DL-1 / KN400).